The chain runs to 318 residues: Ribose-phosphate pyrophosphokinase 1 (318 aa).

Residues 43 to 45 (DGE) and 102 to 103 (RQ) contribute to the ATP site. Mg(2+)-binding residues include His-136 and Asp-176. The active site involves Lys-199. D-ribose 5-phosphate is bound by residues Arg-201, Asp-225, and 229 to 233 (DTAGT).

It belongs to the ribose-phosphate pyrophosphokinase family. Class I subfamily. In terms of assembly, homohexamer. Mg(2+) serves as cofactor.

It localises to the cytoplasm. The catalysed reaction is D-ribose 5-phosphate + ATP = 5-phospho-alpha-D-ribose 1-diphosphate + AMP + H(+). It functions in the pathway metabolic intermediate biosynthesis; 5-phospho-alpha-D-ribose 1-diphosphate biosynthesis; 5-phospho-alpha-D-ribose 1-diphosphate from D-ribose 5-phosphate (route I): step 1/1. Functionally, involved in the biosynthesis of the central metabolite phospho-alpha-D-ribosyl-1-pyrophosphate (PRPP) via the transfer of pyrophosphoryl group from ATP to 1-hydroxyl of ribose-5-phosphate (Rib-5-P). The protein is Ribose-phosphate pyrophosphokinase 1 of Listeria innocua serovar 6a (strain ATCC BAA-680 / CLIP 11262).